The chain runs to 254 residues: Phosphoribosylaminoimidazole-succinocarboxamide synthase (254 aa).

It belongs to the SAICAR synthetase family.

The catalysed reaction is 5-amino-1-(5-phospho-D-ribosyl)imidazole-4-carboxylate + L-aspartate + ATP = (2S)-2-[5-amino-1-(5-phospho-beta-D-ribosyl)imidazole-4-carboxamido]succinate + ADP + phosphate + 2 H(+). It participates in purine metabolism; IMP biosynthesis via de novo pathway; 5-amino-1-(5-phospho-D-ribosyl)imidazole-4-carboxamide from 5-amino-1-(5-phospho-D-ribosyl)imidazole-4-carboxylate: step 1/2. The chain is Phosphoribosylaminoimidazole-succinocarboxamide synthase from Gluconobacter oxydans (strain 621H) (Gluconobacter suboxydans).